The following is a 349-amino-acid chain: Putative methylesterase 12, chloroplastic (349 aa).

A chloroplast-targeting transit peptide spans 1-77; sequence MGNRVICMKK…GSTSSRRGTL (77 aa). The interval 61-80 is disordered; that stretch reads GSMSRRIGSTSSRRGTLSDS. The Acyl-ester intermediate role is filled by serine 173. Active-site charge relay system residues include aspartate 300 and histidine 328.

Belongs to the AB hydrolase superfamily. Methylesterase family.

It is found in the plastid. It localises to the chloroplast. Putative methylesterase. The polypeptide is Putative methylesterase 12, chloroplastic (Arabidopsis thaliana (Mouse-ear cress)).